A 380-amino-acid polypeptide reads, in one-letter code: PqqA peptide cyclase (380 aa).

Residues 12–228 form the Radical SAM core domain; that stretch reads FGIPLAVLLE…EEARERLKGR (217 aa). 3 residues coordinate [4Fe-4S] cluster: Cys-26, Cys-30, and Cys-33.

This sequence belongs to the radical SAM superfamily. PqqE family. As to quaternary structure, interacts with PqqD. The interaction is necessary for activity of PqqE. Requires [4Fe-4S] cluster as cofactor.

It catalyses the reaction [PQQ precursor protein] + S-adenosyl-L-methionine = E-Y cross-linked-[PQQ precursor protein] + 5'-deoxyadenosine + L-methionine + H(+). Its pathway is cofactor biosynthesis; pyrroloquinoline quinone biosynthesis. Its function is as follows. Catalyzes the cross-linking of a glutamate residue and a tyrosine residue in the PqqA protein as part of the biosynthesis of pyrroloquinoline quinone (PQQ). The chain is PqqA peptide cyclase from Bradyrhizobium diazoefficiens (strain JCM 10833 / BCRC 13528 / IAM 13628 / NBRC 14792 / USDA 110).